The sequence spans 306 residues: Mitochondrial 2-oxoglutarate/malate carrier protein (306 aa).

Solcar repeat units follow at residues 7-95, 103-194, and 203-292; these read VPNV…LLER, LSFG…AKQA, and DGIF…MNAA. 6 helical membrane-spanning segments follow: residues 9–38, 72–93, 108–122, 172–192, 205–226, and 268–286; these read NVVKFAFGGTAGMGATLVVQPLDLVKNRMQ, SAGLLRQATYTTTRLGTYAFLL, KAVLGMTAGGIGSFV, PTVLRAMVVNAAQLATYSQAK, IFCHFLASMISGLATTIASMPV, and FTPYYMRLGPHTVLTFIIL.

This sequence belongs to the mitochondrial carrier (TC 2.A.29) family. As to quaternary structure, interacts with ant-1.1 and ced-9. Ubiquitously expressed, but highly expressed in the anterior pharynx.

The protein resides in the mitochondrion. It localises to the mitochondrion inner membrane. It carries out the reaction (S)-malate(in) + 2-oxoglutarate(out) = (S)-malate(out) + 2-oxoglutarate(in). It catalyses the reaction malonate(in) + 2-oxoglutarate(out) = malonate(out) + 2-oxoglutarate(in). The catalysed reaction is succinate(in) + 2-oxoglutarate(out) = succinate(out) + 2-oxoglutarate(in). The enzyme catalyses maleate(in) + 2-oxoglutarate(out) = maleate(out) + 2-oxoglutarate(in). It carries out the reaction oxaloacetate(in) + 2-oxoglutarate(out) = oxaloacetate(out) + 2-oxoglutarate(in). Catalyzes the transport of 2-oxoglutarate (alpha-oxoglutarate) across the inner mitochondrial membrane in an electroneutral exchange for malate. Can also exchange 2-oxoglutarate for other dicarboxylic acids such as malonate, succinate, maleate and oxaloacetate, although with lower affinity. Contributes to several metabolic processes, including the malate-aspartate shuttle, the oxoglutarate/isocitrate shuttle, in gluconeogenesis from lactate, and in nitrogen metabolism. Maintains mitochondrial fusion and fission events, and the organization and morphology of cristae. Regulator of apoptosis, insulin secretion and germline proliferation. Furthermore, plays a role in the oxidative stress response regulating endogenous levels of reactive oxygen species (ROS). Involved in the regulation of lin-35/Rb-mediated apoptosis in the germline. In Caenorhabditis elegans, this protein is Mitochondrial 2-oxoglutarate/malate carrier protein.